Here is a 79-residue protein sequence, read N- to C-terminus: Potassium channel toxin Hge-beta-KTx (79 aa).

A signal peptide spans 1-21; that stretch reads MAKSFFAAFLIIMLISSLVDG. The region spanning 48 to 79 is the BetaSPN-type CS-alpha/beta domain; it reads EYMCPVVSSFCKQHCARLGKSGQCDLLECICS. 3 cysteine pairs are disulfide-bonded: Cys-51–Cys-71, Cys-58–Cys-76, and Cys-62–Cys-78.

As to expression, expressed by the venom gland.

The protein localises to the secreted. Its function is as follows. The full peptide presents antibacterial and cytotoxic activities. The synthetic C-terminus (AA 33-76) inhibits voltage-gated potassium channels Kv1.1/KCNA1, Kv1.2/KCNA2, and Kv1.3/KCNA3. In Hoffmannihadrurus gertschi (Scorpion), this protein is Potassium channel toxin Hge-beta-KTx.